The primary structure comprises 142 residues: Small ribosomal subunit protein bS6 (142 aa).

Positions 110–133 (NKKPSHAKEKHEKTEHTHSHHAEE) are enriched in basic and acidic residues. Positions 110–142 (NKKPSHAKEKHEKTEHTHSHHAEEAESVGSHSE) are disordered.

Belongs to the bacterial ribosomal protein bS6 family.

Functionally, binds together with bS18 to 16S ribosomal RNA. This Helicobacter pylori (strain P12) protein is Small ribosomal subunit protein bS6.